Consider the following 165-residue polypeptide: Xanthine-guanine phosphoribosyltransferase (165 aa).

5-phospho-alpha-D-ribose 1-diphosphate-binding positions include 41 to 42 (RG) and 98 to 106 (DDLTDTGKT). D99 is a Mg(2+) binding site. Residues D102 and I145 each coordinate guanine. The xanthine site is built by D102 and I145. GMP-binding positions include 102-106 (DTGKT) and 144-145 (WI).

Belongs to the purine/pyrimidine phosphoribosyltransferase family. XGPT subfamily. As to quaternary structure, homotetramer. Mg(2+) is required as a cofactor.

The protein localises to the cell inner membrane. It carries out the reaction GMP + diphosphate = guanine + 5-phospho-alpha-D-ribose 1-diphosphate. The catalysed reaction is XMP + diphosphate = xanthine + 5-phospho-alpha-D-ribose 1-diphosphate. It catalyses the reaction IMP + diphosphate = hypoxanthine + 5-phospho-alpha-D-ribose 1-diphosphate. The protein operates within purine metabolism; GMP biosynthesis via salvage pathway; GMP from guanine: step 1/1. Its pathway is purine metabolism; XMP biosynthesis via salvage pathway; XMP from xanthine: step 1/1. Functionally, purine salvage pathway enzyme that catalyzes the transfer of the ribosyl-5-phosphate group from 5-phospho-alpha-D-ribose 1-diphosphate (PRPP) to the N9 position of the 6-oxopurines guanine and xanthine to form the corresponding ribonucleotides GMP (guanosine 5'-monophosphate) and XMP (xanthosine 5'-monophosphate), with the release of PPi. To a lesser extent, also acts on hypoxanthine. The polypeptide is Xanthine-guanine phosphoribosyltransferase (Rhizobium meliloti (strain 1021) (Ensifer meliloti)).